A 427-amino-acid polypeptide reads, in one-letter code: UPF0229 protein YeaH (427 aa).

Residues 79-90 are compositionally biased toward basic and acidic residues; the sequence is NDHFVQNDRIER. The disordered stretch occupies residues 79–110; the sequence is NDHFVQNDRIERPQGGGGGSGSGQGQASQDGE. The segment covering 92–102 has biased composition (gly residues); that stretch reads QGGGGGSGSGQ.

This sequence belongs to the UPF0229 family.

This is UPF0229 protein YeaH from Escherichia coli O9:H4 (strain HS).